The chain runs to 656 residues: DNA mismatch repair protein MutL (656 aa).

Residues 385-427 (DNSDSLTEQNSTDYTVNQPETGSVSEKITDRTVESSNEFTDRT) are disordered. Polar residues predominate over residues 387–410 (SDSLTEQNSTDYTVNQPETGSVSE). Basic and acidic residues predominate over residues 411 to 427 (KITDRTVESSNEFTDRT).

The protein belongs to the DNA mismatch repair MutL/HexB family.

In terms of biological role, this protein is involved in the repair of mismatches in DNA. It is required for dam-dependent methyl-directed DNA mismatch repair. May act as a 'molecular matchmaker', a protein that promotes the formation of a stable complex between two or more DNA-binding proteins in an ATP-dependent manner without itself being part of a final effector complex. The protein is DNA mismatch repair protein MutL of Lactococcus lactis subsp. cremoris (strain SK11).